An 867-amino-acid chain; its full sequence is MSDVFNTPHARRTITQALGLTNVSDRTQDWLLPEPWNPPMDPIKNSQEAAEYLQRNQYRMLKPRAIPENTPLDTSELFPHLAEFVGSGAFGTSTLVPAGSTEYIPRYYPTHKPEHNKPTPFGHYDVALLKQMTYQLTNGKDNPEEEGTTFRQFRDTIVEQQYGSGTSQGQLARLVAMKEVATGRNPNKSPKELGLSMEEIATMLEQTLPIGQPGGDEGWPSLTTTLSELLNPAEGMDYLPHITMKSSSGLPFIGKTKGETVTSALAICDTFLREVSECVKEGAMASDNQKLQKLLQDYWYLSCGLLFPKAERYEKKAWLTKTRNIWSAPFPTHLLLSTISWPIMNSSKNNILNVPECVSLYGFNPFSGGMDAVVTNILAQPDETLFLIYADNIYIYMDRTWFSIDLEKGEANATPEHAQAVSYYLLTRGWTQDDGSPAFNATWATIAMMIAPSLVVDSSCLFMNLQLKTYGQGSGNAWTFLINHTLSTILVGKWIEAGQPNPRSKEFMDLEAATGINFKIEREIEGLPTRLQEAMDKAVHTGFLGDGTTNPPEKEGPTVDLDLLGWSATYSRHMDMWVPVLDKERLLSSAAYPKGLENKDLKGKPGAEIAYKIVRNEALLMVGGWNYPLIARSLMANTSAARNNLRQKGVPLDTLTRDWEKMTEFSDIFEDLPIDTKLEVTSEFLQRLNLRGERKQPNVNKHHLRTKGLKKCVSALKQGACRNPTTVAGLKLTAYSKSRINKAKAVFDEINNLPKTESDDWSDRMDDADRLMKANNLYMREARSALEDVHNSLLALSGETVKAKTPQEKSTEKVSNPVVGYRLPAERATGVQHALLGVGVSRPSEGALTKNARKMKKRREKARGINH.

Residue 249–256 (GLPFIGKT) coordinates GTP. The RdRp catalytic domain maps to 387-591 (LIYADNIYIY…DKERLLSSAA (205 aa)). Positions 845–867 (EGALTKNARKMKKRREKARGINH) are disordered. Over residues 851 to 867 (NARKMKKRREKARGINH) the composition is skewed to basic residues.

In terms of assembly, interacts with VP3 in the cytoplasm. In terms of processing, may exist in multiple phosphorylated forms.

It localises to the virion. It catalyses the reaction RNA(n) + a ribonucleoside 5'-triphosphate = RNA(n+1) + diphosphate. Its function is as follows. RNA-dependent RNA polymerase which is found both free and covalently attached to the genomic RNA. May also contain guanylyl and methyl transferase activities. The protein is RNA-directed RNA polymerase (VP1) of Blotched snakehead virus (BSNV).